The sequence spans 557 residues: Urocanate hydratase (557 aa).

NAD(+) is bound by residues 52 to 53 (GG), Q130, 176 to 178 (GMG), E196, 242 to 243 (NA), 263 to 267 (QTSAH), 273 to 274 (YL), and Y322. The active site involves C410. Residue G492 coordinates NAD(+).

The protein belongs to the urocanase family. NAD(+) serves as cofactor.

The protein localises to the cytoplasm. The enzyme catalyses 4-imidazolone-5-propanoate = trans-urocanate + H2O. Its pathway is amino-acid degradation; L-histidine degradation into L-glutamate; N-formimidoyl-L-glutamate from L-histidine: step 2/3. Catalyzes the conversion of urocanate to 4-imidazolone-5-propionate. The protein is Urocanate hydratase of Rhizobium meliloti (strain 1021) (Ensifer meliloti).